We begin with the raw amino-acid sequence, 786 residues long: Rho GTPase-activating protein 10 (786 aa).

The region spanning 7–262 is the BAR domain; the sequence is EFSDCYLDSP…IRQNPKDQKR (256 aa). One can recognise a PH domain in the interval 265–372; it reads QFTAEGYLYV…WLEALGGKEA (108 aa). Residues 389–574 form the Rho-GAP domain; that stretch reads AQLDKMGFTI…ILIENHEKIF (186 aa). Disordered stretches follow at residues 584 to 609 and 622 to 714; these read EPTC…RTKR and EGDS…PFPL. Residues 599–609 show a composition bias toward basic residues; sequence QSKRQGQRTKR. Residues 634–649 are compositionally biased toward low complexity; sequence PSSSQDSLSTPSPTTS. Residues 673–701 are compositionally biased toward polar residues; it reads TATTPSQTRPSMVQWLNMQSPTTPSSNPA. Positions 702–714 are enriched in pro residues; that stretch reads GTPPSPRMSPFPL. One can recognise an SH3 domain in the interval 728-786; sequence VINRKARAVYPCEAEHSSELSFEIGAIFEDVQTSREPGWLEGTLNGKRGLIPQNYVKLL.

Interacts with PKN3. Interacts with caspase-activated PAK2 proteolytic fragment PAK-2p34; the interaction does not affect ARHGAP10 GTPase activation activity towards RHOA and CDC42. Interacts via its SH3 domain with PTK2/FAK1. Interacts with PTK2B/PYK2; the interaction negatively regulates ARHGAP10 GTPase-activating activity. Interacts with MICAL1 and WDR44; complex formation might transit from GRAF2/ARHGAP10-MICAL1 to GRAF2/ARHGAP10-WDR44 complexes. In terms of processing, phosphorylated on tyrosine residues, probably involving PTK2B/PYK2. As to expression, high levels of expression in brain, testes, liver, heart and kidney.

The protein localises to the cytoplasm. Its subcellular location is the perinuclear region. The protein resides in the cell membrane. It is found in the endosome membrane. Its function is as follows. GTPase-activating protein that catalyzes the conversion of active GTP-bound Rho GTPases to their inactive GDP-bound form, thus suppressing various Rho GTPase-mediated cellular processes. Also converts Cdc42 to an inactive GDP-bound state. Essential for PTKB2 regulation of cytoskeletal organization via Rho family GTPases. Inhibits PAK2 proteolytic fragment PAK-2p34 kinase activity and changes its localization from the nucleus to the perinuclear region. Stabilizes PAK-2p34 thereby increasing stimulation of cell death. Associates with MICAL1 on the endosomal membrane to promote Rab8-Rab10-dependent tubule extension. After dissociation with MICAL1, recruits WDR44 which connects the endoplasmic reticulum (ER) with the endosomal tubule, thereby participating in the export of a subset of neosynthesized proteins. The chain is Rho GTPase-activating protein 10 (Arhgap10) from Mus musculus (Mouse).